The following is a 452-amino-acid chain: Translation initiation factor eIF2B subunit gamma (452 aa).

The residue at position 1 (M1) is an N-acetylmethionine. Position 261 is a phosphoserine (S261).

It belongs to the eIF-2B gamma/epsilon subunits family. Component of the translation initiation factor 2B (eIF2B) complex which is a heterodecamer of two sets of five different subunits: alpha, beta, gamma, delta and epsilon. Subunits alpha, beta and delta comprise a regulatory subcomplex and subunits epsilon and gamma comprise a catalytic subcomplex. Within the complex, the hexameric regulatory complex resides at the center, with the two heterodimeric catalytic subcomplexes bound on opposite sides.

Its subcellular location is the cytoplasm. The protein resides in the cytosol. Its activity is regulated as follows. Activated by the chemical integrated stress response (ISR) inhibitor ISRIB which stimulates guanine nucleotide exchange factor activity for both phosphorylated and unphosphorylated eIF2. Acts as a component of the translation initiation factor 2B (eIF2B) complex, which catalyzes the exchange of GDP for GTP on the eukaryotic initiation factor 2 (eIF2) complex gamma subunit. Its guanine nucleotide exchange factor activity is repressed when bound to eIF2 complex phosphorylated on the alpha subunit, thereby limiting the amount of methionyl-initiator methionine tRNA available to the ribosome and consequently global translation is repressed. This is Translation initiation factor eIF2B subunit gamma (EIF2B3) from Bos taurus (Bovine).